Consider the following 405-residue polypeptide: Type III polyketide synthase 10 (405 aa).

Residues 1–18 (MVSTNAGGIASKQASSMA) show a composition bias toward polar residues. A disordered region spans residues 1-20 (MVSTNAGGIASKQASSMAPN). C170 functions as the Nucleophile in the catalytic mechanism.

It belongs to the thiolase-like superfamily. Chalcone/stilbene synthases family. Interacts with STS1. Expressed in adult flowers.

The protein resides in the endoplasmic reticulum. Plant type III polyketide synthases (PKSs) that catalyzes the condensation of fatty acyl-CoA with malonyl-CoA to generate triketide and tetraketide alpha-pyrones, the main components of pollen exine and potential sporopollenin precursors. May be involved in the synthesis of sporopollenin precursors in tapetal cells to regulate pollen wall formation. Required for exine and Ubisch body formation in anthers. Does not possess chalcone synthase (CHS) activity in vitro with the substrates 4-coumaroyl-CoA and malonyl-CoA. This is Type III polyketide synthase 10 from Oryza sativa subsp. japonica (Rice).